Consider the following 155-residue polypeptide: Fibroblast growth factor 1 (155 aa).

Position 2 is an N-acetylalanine (alanine 2). Positions 2–15 are excised as a propeptide; it reads AEGEITTFAALTER. Heparin is bound at residue asparagine 33. The interval 127 to 143 is heparin-binding; it reads KKNGSCKRGPRTHYGQK.

The protein belongs to the heparin-binding growth factors family. As to quaternary structure, monomer. Homodimer. Interacts with FGFR1, FGFR2, FGFR3 and FGFR4. Affinity between fibroblast growth factors (FGFs) and their receptors is increased by heparan sulfate glycosaminoglycans that function as coreceptors. Found in a complex with FGFBP1, FGF1 and FGF2. Interacts with FGFBP1. Part of a Cu(2+)-dependent multiprotein aggregate containing FGF1, S100A13 and SYT1. Interacts with SYT1. Interacts with S100A13. Interacts with LRRC59. Interacts with CSNKA, CSNKB and FIBP. While binding with LRRC59, CSNKA and FIBP seem mutually exclusive, CSNKB and FIBP may cooperatively interact with FGF1. Forms a ternary complex with FGFR1 and ITGAV:ITGB3 and induces the recruitment of PTPN11 to the complex. In the nucleus, phosphorylated by PKC/PRKCD.

The protein localises to the secreted. Its subcellular location is the cytoplasm. It localises to the cell cortex. The protein resides in the cytosol. It is found in the nucleus. Functionally, plays an important role in the regulation of cell survival, cell division, angiogenesis, cell differentiation and cell migration. Functions as a potent mitogen in vitro. Acts as a ligand for FGFR1 and integrins. Binds to FGFR1 in the presence of heparin leading to FGFR1 dimerization and activation via sequential autophosphorylation on tyrosine residues which act as docking sites for interacting proteins, leading to the activation of several signaling cascades. Binds to integrin ITGAV:ITGB3. Its binding to integrin, subsequent ternary complex formation with integrin and FGFR1, and the recruitment of PTPN11 to the complex are essential for FGF1 signaling. Induces the phosphorylation and activation of FGFR1, FRS2, MAPK3/ERK1, MAPK1/ERK2 and AKT1. Can induce angiogenesis. The polypeptide is Fibroblast growth factor 1 (Fgf1) (Mus musculus (Mouse)).